Consider the following 246-residue polypeptide: Granzyme H (246 aa).

The signal sequence occupies residues 1-18 (MQPFLLLLAFLLTPGAGT). A propeptide spans 19–20 (EE) (activation peptide). The 224-residue stretch at 21–244 (IIGGHEAKPH…FLPWIKRTMK (224 aa)) folds into the Peptidase S1 domain. The tract at residues 46–48 (RKR) is mediates the preference for acidic residues at the P3' and P4' sites. Cysteine 49 and cysteine 65 form a disulfide bridge. Histidine 64 serves as the catalytic Charge relay system. 2 N-linked (GlcNAc...) asparagine glycosylation sites follow: asparagine 71 and asparagine 104. Catalysis depends on aspartate 108, which acts as the Charge relay system. 2 disulfides stabilise this stretch: cysteine 142-cysteine 208 and cysteine 172-cysteine 187. A glycan (N-linked (GlcNAc...) asparagine) is linked at asparagine 179. Serine 202 acts as the Charge relay system in catalysis.

It belongs to the peptidase S1 family. Granzyme subfamily. As to expression, constitutively expressed in NK cells.

It is found in the cytolytic granule. Its activity is regulated as follows. Inhibited by SERPINB1. In terms of biological role, cytotoxic chymotrypsin-like serine protease with preference for bulky and aromatic residues at the P1 position and acidic residues at the P3' and P4' sites. Probably necessary for target cell lysis in cell-mediated immune responses. Participates in the antiviral response via direct cleavage of several proteins essential for viral replication. The chain is Granzyme H (GZMH) from Homo sapiens (Human).